The primary structure comprises 160 residues: MVSVRIGQGFDVHAFDEGDHVMLGGVAIPHSHGLKAHSDGDVALHALSDALLGALALGDIGHHFPDTDPQWRGADSGQLLTAIYSSILDAGWRLGNADLTVICQAPKLAPHILAMRERIAALLQCEQGQVSVKATTTEKLGFTGRKEGIAVQAVVLLESQ.

The a divalent metal cation site is built by Asp11 and His13. Residues 11–13 and 37–38 contribute to the 4-CDP-2-C-methyl-D-erythritol 2-phosphate site; these read DVH and HS. Position 45 (His45) interacts with a divalent metal cation. 4-CDP-2-C-methyl-D-erythritol 2-phosphate contacts are provided by residues 59 to 61, 64 to 68, 135 to 138, Phe142, and Arg145; these read DIG, FPDTD, and TTTE.

It belongs to the IspF family. Homotrimer. The cofactor is a divalent metal cation.

It catalyses the reaction 4-CDP-2-C-methyl-D-erythritol 2-phosphate = 2-C-methyl-D-erythritol 2,4-cyclic diphosphate + CMP. The protein operates within isoprenoid biosynthesis; isopentenyl diphosphate biosynthesis via DXP pathway; isopentenyl diphosphate from 1-deoxy-D-xylulose 5-phosphate: step 4/6. Its function is as follows. Involved in the biosynthesis of isopentenyl diphosphate (IPP) and dimethylallyl diphosphate (DMAPP), two major building blocks of isoprenoid compounds. Catalyzes the conversion of 4-diphosphocytidyl-2-C-methyl-D-erythritol 2-phosphate (CDP-ME2P) to 2-C-methyl-D-erythritol 2,4-cyclodiphosphate (ME-CPP) with a corresponding release of cytidine 5-monophosphate (CMP). The polypeptide is 2-C-methyl-D-erythritol 2,4-cyclodiphosphate synthase (Alcanivorax borkumensis (strain ATCC 700651 / DSM 11573 / NCIMB 13689 / SK2)).